A 710-amino-acid chain; its full sequence is Chaperonin-containing T-complex member BBS12 (710 aa).

This sequence belongs to the TCP-1 chaperonin family. BBS12 subfamily. In terms of assembly, component of the chaperonin-containing T-complex (TRiC), a heterooligomeric complex of about 850 to 900 kDa that forms two stacked rings, 12 to 16 nm in diameter. Interacts with MKKS.

It localises to the cell projection. The protein resides in the cilium. Component of the chaperonin-containing T-complex (TRiC), a molecular chaperone complex that assists the folding of proteins upon ATP hydrolysis. As part of the TRiC complex may play a role in the assembly of BBSome, a complex involved in ciliogenesis regulating transports vesicles to the cilia. Involved in adipogenic differentiation. The protein is Chaperonin-containing T-complex member BBS12 (BBS12) of Pongo abelii (Sumatran orangutan).